The primary structure comprises 369 residues: MKKVIVGISGGVDSSVAAWLLQQQGYLVEGLFMKNWENDDEKEYCSSEEDLSDAWSICNTLKIPLHTVNFAQEYWENVFQVFLQAYQSGFTPNPDVLCNKEIKFKHFLDFALEDLGADFIATGHYVRCMNVKKKITLMKGIDQNKDQSYFLYTLNQQQLKRCLFPIGSLTKLTVRKIAKELNLITANKKDSTGICFIGKRNFRSFLSNYIAIQPGDIINIHGNKLGLHQGIPFYTIGQRKGLNIGGISNGNGKPWYVVDKNITHNVLIVAQGINHPCLMSRIFIVQKIFWIKGNILKSPIQCSVKIRYQQSDVQCQIYPISVDTLKIILKQPVTAIAPGQSAVFYIKKHCIGGGTIIKRFPLIHIKNYY.

ATP contacts are provided by residues 7 to 14 and methionine 33; that span reads GISGGVDS. An interaction with target base in tRNA region spans residues 93–95; sequence NPD. Cysteine 98 functions as the Nucleophile in the catalytic mechanism. A disulfide bridge links cysteine 98 with cysteine 195. Glycine 123 serves as a coordination point for ATP. Residues 145–147 are interaction with tRNA; it reads KDQ. The active-site Cysteine persulfide intermediate is cysteine 195. The segment at 307–308 is interaction with tRNA; that stretch reads RY.

It belongs to the MnmA/TRMU family. As to quaternary structure, interacts with TusE.

It is found in the cytoplasm. The enzyme catalyses S-sulfanyl-L-cysteinyl-[protein] + uridine(34) in tRNA + AH2 + ATP = 2-thiouridine(34) in tRNA + L-cysteinyl-[protein] + A + AMP + diphosphate + H(+). In terms of biological role, catalyzes the 2-thiolation of uridine at the wobble position (U34) of tRNA(Lys), tRNA(Glu) and tRNA(Gln), leading to the formation of s(2)U34, the first step of tRNA-mnm(5)s(2)U34 synthesis. Sulfur is provided by IscS, via a sulfur-relay system. Binds ATP and its substrate tRNAs. The sequence is that of tRNA-specific 2-thiouridylase MnmA from Blochmanniella floridana.